The chain runs to 200 residues: Peroxiredoxin (200 aa).

The region spanning 6-165 (AQIGKPAPEF…TLRLVQAFQH (160 aa)) is the Thioredoxin domain. The active-site Cysteine sulfenic acid (-SOH) intermediate is the Cys-52.

Belongs to the peroxiredoxin family. AhpC/Prx1 subfamily. As to quaternary structure, homodimer; disulfide-linked, upon oxidation.

The catalysed reaction is a hydroperoxide + [thioredoxin]-dithiol = an alcohol + [thioredoxin]-disulfide + H2O. Its function is as follows. Thiol-specific peroxidase that catalyzes the reduction of hydrogen peroxide and organic hydroperoxides to water and alcohols, respectively. Plays a role in cell protection against oxidative stress by detoxifying peroxides and as sensor of hydrogen peroxide-mediated signaling events. The chain is Peroxiredoxin from Cynops pyrrhogaster (Japanese fire-bellied newt).